The sequence spans 460 residues: TNF receptor-associated factor family protein DDB_G0290883 (460 aa).

Residues 27-67 (CPICFEFIYKKQIYQCKSGHHACKECWEKSLETKKECMTCK) form an RING-type; degenerate zinc finger. 2 TRAF-type zinc fingers span residues 141 to 194 (SHLI…KKEL) and 196 to 253 (THYK…SELQ). The MATH domain occupies 320 to 448 (GYRNKWIISN…DDKLTIEIYI (129 aa)).

Belongs to the TNF receptor-associated factor family. A subfamily.

It localises to the cytoplasm. In terms of biological role, probable adapter protein and signal transducer that links members of the tumor necrosis factor receptor family to different signaling pathways by association with the receptor cytoplasmic domain and kinases. The polypeptide is TNF receptor-associated factor family protein DDB_G0290883 (Dictyostelium discoideum (Social amoeba)).